A 322-amino-acid polypeptide reads, in one-letter code: MSGELPPNINIKEPRWDQSTFVGRANHFFTVTDPRNILLTNEQLENARKVVHDYRQGIVPPGLTENELWRAKYIYDSAFHPDTGEKMILIGRMSAQVPMNMTITGCMMTFYRTTPAVLFWQWINQSFNAVVNYTNRSGDAPLTVNELGTAYVSATTGAVATALGLNALTKHVSPLIGRFVPFAAVAAANCINIPLMRQRELRAGIPVTDENGNRLGESANAAKQAITQVVISRILMAAPGMAIPPFIMNTLEKKAFLKRFPWMSAPIQVGLVGFCLVFATPLCCALFPQKSSMSVTSLEAELQAKIRETSPELRRVYFNKGL.

Serine 2 bears the N-acetylserine mark. The Mitochondrial matrix segment spans residues 2–102 (SGELPPNINI…MSAQVPMNMT (101 aa)). Residues 103–120 (ITGCMMTFYRTTPAVLFW) traverse the membrane as a helical segment. The Mitochondrial intermembrane portion of the chain corresponds to 121-146 (QWINQSFNAVVNYTNRSGDAPLTVNE). A helical transmembrane segment spans residues 147-167 (LGTAYVSATTGAVATALGLNA). Topologically, residues 168 to 174 (LTKHVSP) are mitochondrial matrix. A helical transmembrane segment spans residues 175 to 195 (LIGRFVPFAAVAAANCINIPL). Over 196 to 228 (MRQRELRAGIPVTDENGNRLGESANAAKQAITQ) the chain is Mitochondrial intermembrane. Residues 229–249 (VVISRILMAAPGMAIPPFIMN) traverse the membrane as a helical segment. Topologically, residues 250–266 (TLEKKAFLKRFPWMSAP) are mitochondrial matrix. A helical membrane pass occupies residues 267 to 287 (IQVGLVGFCLVFATPLCCALF). Residues 288-322 (PQKSSMSVTSLEAELQAKIRETSPELRRVYFNKGL) are Mitochondrial intermembrane-facing.

Belongs to the sideroflexin family.

Its subcellular location is the mitochondrion inner membrane. The catalysed reaction is L-serine(in) = L-serine(out). It catalyses the reaction L-alanine(in) = L-alanine(out). It carries out the reaction L-cysteine(in) = L-cysteine(out). In terms of biological role, amino acid transporter importing serine, an essential substrate of the mitochondrial branch of the one-carbon pathway, into mitochondria. Mitochondrial serine is then converted to glycine and formate, which exits to the cytosol where it is used to generate the charged folates that serve as one-carbon donors. May also transport other amino acids including alanine and cysteine. The protein is Sideroflexin-1 (SFXN1) of Sus scrofa (Pig).